Reading from the N-terminus, the 195-residue chain is ATP-dependent Clp protease proteolytic subunit (195 aa).

The active-site Nucleophile is Ser-99. His-124 is a catalytic residue.

This sequence belongs to the peptidase S14 family. In terms of assembly, fourteen ClpP subunits assemble into 2 heptameric rings which stack back to back to give a disk-like structure with a central cavity, resembling the structure of eukaryotic proteasomes.

It is found in the cytoplasm. The enzyme catalyses Hydrolysis of proteins to small peptides in the presence of ATP and magnesium. alpha-casein is the usual test substrate. In the absence of ATP, only oligopeptides shorter than five residues are hydrolyzed (such as succinyl-Leu-Tyr-|-NHMec, and Leu-Tyr-Leu-|-Tyr-Trp, in which cleavage of the -Tyr-|-Leu- and -Tyr-|-Trp bonds also occurs).. Its function is as follows. Cleaves peptides in various proteins in a process that requires ATP hydrolysis. Has a chymotrypsin-like activity. Plays a major role in the degradation of misfolded proteins. In Carboxydothermus hydrogenoformans (strain ATCC BAA-161 / DSM 6008 / Z-2901), this protein is ATP-dependent Clp protease proteolytic subunit.